The chain runs to 259 residues: Ribosome maturation factor RimP (259 aa).

Over residues 186–195 (RGKQAERELK) the composition is skewed to basic and acidic residues. A disordered region spans residues 186 to 259 (RGKQAERELK…RGDTDLSEGD (74 aa)). Residues 239–248 (KQHRLAAGRS) show a composition bias toward basic residues.

It belongs to the RimP family.

It localises to the cytoplasm. In terms of biological role, required for maturation of 30S ribosomal subunits. This Rhodopseudomonas palustris (strain HaA2) protein is Ribosome maturation factor RimP.